Here is a 249-residue protein sequence, read N- to C-terminus: Sugar fermentation stimulation protein homolog (249 aa).

It belongs to the SfsA family.

The sequence is that of Sugar fermentation stimulation protein homolog from Synechococcus sp. (strain CC9902).